A 378-amino-acid chain; its full sequence is Succinyl-diaminopimelate desuccinylase (378 aa).

A Zn(2+)-binding site is contributed by His-67. The active site involves Asp-69. Asp-100 lines the Zn(2+) pocket. Glu-134 functions as the Proton acceptor in the catalytic mechanism. Zn(2+) contacts are provided by Glu-135, Glu-163, and His-349.

Belongs to the peptidase M20A family. DapE subfamily. As to quaternary structure, homodimer. Zn(2+) serves as cofactor. Co(2+) is required as a cofactor.

It carries out the reaction N-succinyl-(2S,6S)-2,6-diaminopimelate + H2O = (2S,6S)-2,6-diaminopimelate + succinate. It participates in amino-acid biosynthesis; L-lysine biosynthesis via DAP pathway; LL-2,6-diaminopimelate from (S)-tetrahydrodipicolinate (succinylase route): step 3/3. In terms of biological role, catalyzes the hydrolysis of N-succinyl-L,L-diaminopimelic acid (SDAP), forming succinate and LL-2,6-diaminopimelate (DAP), an intermediate involved in the bacterial biosynthesis of lysine and meso-diaminopimelic acid, an essential component of bacterial cell walls. The polypeptide is Succinyl-diaminopimelate desuccinylase (Nitrosospira multiformis (strain ATCC 25196 / NCIMB 11849 / C 71)).